We begin with the raw amino-acid sequence, 789 residues long: Tax1-binding protein 1 (789 aa).

Phosphoserine is present on residues Ser-124, Ser-138, and Ser-225. Positions 144-599 (TTKAGLLELK…LKRSLENPAE (456 aa)) form a coiled coil. Residues 320–420 (EEIGRLQLCL…ELKLNAMKKD (101 aa)) form an oligomerization region. Positions 481–502 (TGNQQKVNDASVNTDPATSAST) are enriched in polar residues. Positions 481–508 (TGNQQKVNDASVNTDPATSASTVDVKPS) are disordered. Phosphoserine; by IKKA is present on Ser-593. Ser-609 is subject to Phosphoserine. Residues 639 to 660 (YASQETRDGADGAFYPDEIQRP) form a disordered region. Ser-666 is modified (phosphoserine; by IKKA). Residues 678–712 (PARNFSRPDGLEDSEDSKEDENVPTAPDPPSQHLR) are disordered. 2 UBZ1-type zinc fingers span residues 727-753 (HKKC…VESH) and 754-780 (WKVC…VQTH). Cys-730, Cys-733, His-749, His-753, Cys-757, Cys-760, His-776, and His-780 together coordinate Zn(2+).

In terms of assembly, homooligomer. Interacts with TNFAIP3. Interacts with STARD13. Interacts with MYO6. Interacts with TOM1; the interaction is indirect and is mediated by MYO6, which acts as a bridge between TOM1 and TAX1BP1. Interacts with MAVS; this interaction induces MAVS polyubiquitination. Interacts with TNIP1. Interacts with TRAF6; this interaction mediates deubiquitination of TRAF6 and inhibition of NF-kappa-B activation. Interacts with RIPK1; this interaction negatively regulates RIPK1 ubiquitination. Interacts with NBR1. Interacts with TBK1. Interacts with RB1CC1. Interacts with SQSTM1. Interacts with AZI2. Interacts with TICAM1 and TRIM32; these interactions target TICAM1 to TAX1BP1-mediated selective autophagic degradation. As to quaternary structure, (Microbial infection) Interacts with the HTLV-1 protein Tax. (Microbial infection) Interacts with Respiratory syncytial virus protein N; this interaction may promote viral growth by inhibiting the innate immune response. In terms of assembly, (Microbial infection) Interacts with Lassa virus protein Z. As to quaternary structure, (Microbial infection) Interacts with Mopeia virus protein Z. Phosphorylated in the C-terminal region by CHUK/IKKA leading to NF-kappa-B signaling down-regulation. In terms of tissue distribution, expressed in all tissues tested.

Its subcellular location is the cytoplasm. It localises to the mitochondrion. It is found in the preautophagosomal structure. The protein resides in the cytoplasmic vesicle. The protein localises to the autophagosome. Functionally, ubiquitin-binding adapter that participates in inflammatory, antiviral and innate immune processes as well as selective autophagy regulation. Plays a key role in the negative regulation of NF-kappa-B and IRF3 signalings by acting as an adapter for the ubiquitin-editing enzyme A20/TNFAIP3 to bind and inactivate its substrates. Disrupts the interactions between the E3 ubiquitin ligase TRAF3 and TBK1/IKBKE to attenuate 'Lys63'-linked polyubiquitination of TBK1 and thereby IFN-beta production. Also recruits A20/TNFAIP3 to ubiquitinated signaling proteins TRAF6 and RIPK1, leading to their deubiquitination and disruption of IL-1 and TNF-induced NF-kappa-B signaling pathways. Inhibits virus-induced apoptosis by inducing the 'Lys-48'-linked polyubiquitination and degradation of MAVS via recruitment of the E3 ligase ITCH, thereby attenuating MAVS-mediated apoptosis signaling. As a macroautophagy/autophagy receptor, facilitates the xenophagic clearance of pathogenic bacteria such as Salmonella typhimurium and Mycobacterium tuberculosis. Upon NBR1 recruitment to the SQSTM1-ubiquitin condensates, acts as the major recruiter of RB1CC1 to these ubiquitin condensates to promote their autophagic degradation. Mediates the autophagic degradation of other substrates including TICAM1. This chain is Tax1-binding protein 1 (TAX1BP1), found in Homo sapiens (Human).